The following is a 151-amino-acid chain: Ribosome maturation factor RimP (151 aa).

It belongs to the RimP family.

The protein resides in the cytoplasm. Its function is as follows. Required for maturation of 30S ribosomal subunits. This Haemophilus influenzae (strain PittGG) protein is Ribosome maturation factor RimP.